Reading from the N-terminus, the 140-residue chain is Probable NADH dehydrogenase [ubiquinone] iron-sulfur protein 6, mitochondrial (140 aa).

It belongs to the complex I NDUFS6 subunit family. Complex I is composed of 45 different subunits. This is a component of the iron-sulfur (IP) fragment of the enzyme.

The protein resides in the mitochondrion inner membrane. Its function is as follows. Accessory subunit of the mitochondrial membrane respiratory chain NADH dehydrogenase (Complex I), that is believed not to be involved in catalysis. Complex I functions in the transfer of electrons from NADH to the respiratory chain. The immediate electron acceptor for the enzyme is believed to be ubiquinone. In Caenorhabditis elegans, this protein is Probable NADH dehydrogenase [ubiquinone] iron-sulfur protein 6, mitochondrial (nduf-6).